A 279-amino-acid polypeptide reads, in one-letter code: Tryptophan 2,3-dioxygenase (279 aa).

Residues 48 to 52 (FIIQH), Tyr110, and Arg114 each bind substrate. His237 is a heme binding site. Thr251 lines the substrate pocket.

The protein belongs to the tryptophan 2,3-dioxygenase family. As to quaternary structure, homotetramer. It depends on heme as a cofactor.

The enzyme catalyses L-tryptophan + O2 = N-formyl-L-kynurenine. Its pathway is amino-acid degradation; L-tryptophan degradation via kynurenine pathway; L-kynurenine from L-tryptophan: step 1/2. Functionally, heme-dependent dioxygenase that catalyzes the oxidative cleavage of the L-tryptophan (L-Trp) pyrrole ring and converts L-tryptophan to N-formyl-L-kynurenine. Catalyzes the oxidative cleavage of the indole moiety. The chain is Tryptophan 2,3-dioxygenase from Ruegeria sp. (strain TM1040) (Silicibacter sp.).